The primary structure comprises 715 residues: MTAKTKPAPDIATLTKPKAKVELMRLRLEIEGHDKAYYQDDAPKISDADYDALRRRLEAIEQKFPELVNASSPTQTVGAAPARGFAKVQHAVPMLSLGNAFADDEVAEFVERVQRFLRLDDVPAIVAEPKIDGLSLSLRYENGELVRAATRGDGFTGEDVTANVRTIKDVPNTLKGKHIPAACELRGEVYMLKQDFLALNKRQEEAGETVFANPRNSAAGSLRQKDVLVTASRPLKFFAYAWGEMSTYPMDEPTQHKMLQWLDHAGFVVNPEITLCHSVEDALAFYRRIGEKRASLPYDIDGVVYKVDRLDYQERLGFVSRSPRWAIAHKFAAEQATTVLEKIDIQVGRTGALTPVARLQPVTVGGVVVQNATLHNEDYIRGIGNDGEPIRDGVDIREGDTVVVQRAGDVIPQIVSVVMQKRPAGAEPYHFPHKCPVCGSHAVREEGEAVWRCTGALICPAQAVERLKHFVSRLAFDIDGLGEKQIELFHERGWVQEPADIFTLKARNDQLKLEQLEGYGETSVRNLFAAIDARRTIELHRLIFALGIRHVGEGNAKLLARHYGTLDAFLSAMRAAADAQTEEGNTSEAYQDLDNIAGIGDVVAEAVVEFFAEERNIKALDALLAELTEVLPAEQARRDTAVAGKTVVFTGSLSKFTRDEAKAAAERLGAKVAGSVSKKTDYVVAGEDAGSKLTKAKDLGVTVLTEDEWLALIGN.

NAD(+)-binding positions include 47–51 (DADYD), 96–97 (SL), and E128. K130 acts as the N6-AMP-lysine intermediate in catalysis. NAD(+) is bound by residues R151, E188, K306, and K330. C435, C438, C453, and C459 together coordinate Zn(2+). The BRCT domain maps to 637-715 (RRDTAVAGKT…EDEWLALIGN (79 aa)).

The protein belongs to the NAD-dependent DNA ligase family. LigA subfamily. It depends on Mg(2+) as a cofactor. Mn(2+) is required as a cofactor.

The enzyme catalyses NAD(+) + (deoxyribonucleotide)n-3'-hydroxyl + 5'-phospho-(deoxyribonucleotide)m = (deoxyribonucleotide)n+m + AMP + beta-nicotinamide D-nucleotide.. DNA ligase that catalyzes the formation of phosphodiester linkages between 5'-phosphoryl and 3'-hydroxyl groups in double-stranded DNA using NAD as a coenzyme and as the energy source for the reaction. It is essential for DNA replication and repair of damaged DNA. In Rhodopseudomonas palustris (strain TIE-1), this protein is DNA ligase.